We begin with the raw amino-acid sequence, 150 residues long: UPF0178 protein DMR_20710 (150 aa).

The protein belongs to the UPF0178 family.

This is UPF0178 protein DMR_20710 from Solidesulfovibrio magneticus (strain ATCC 700980 / DSM 13731 / RS-1) (Desulfovibrio magneticus).